The primary structure comprises 201 residues: Small ribosomal subunit protein uS4 (201 aa).

One can recognise an S4 RNA-binding domain in the interval 91 to 157 (SRLDNVVYRA…VPFQIARETA (67 aa)).

It belongs to the universal ribosomal protein uS4 family. In terms of assembly, part of the 30S ribosomal subunit. Contacts protein S5. The interaction surface between S4 and S5 is involved in control of translational fidelity.

One of the primary rRNA binding proteins, it binds directly to 16S rRNA where it nucleates assembly of the body of the 30S subunit. In terms of biological role, with S5 and S12 plays an important role in translational accuracy. In Mycolicibacterium paratuberculosis (strain ATCC BAA-968 / K-10) (Mycobacterium paratuberculosis), this protein is Small ribosomal subunit protein uS4.